We begin with the raw amino-acid sequence, 352 residues long: MDYQVSSPTYDIDYYTSEPCQKINVKQIAARLLPPLYSLVFIFGFVGNILVVLILINCKRLKSMTDIYLLNLAISDLLFLLTVPFWAHYAAAQWDFGNTMCQLLTGLYFIGFFSGIFFIILLTIDRYLAIVHAVFALKARTVTFGVVTSVITWVVAVFASLPGIIFTRSQREGLHYTCSSHFPYSQYQFWKNFQTLKMVILGLVLPLLVMVICYSGILKTLLRCRNEKKRHRAVRLIFTIMIVYFLFWAPYNIVLLLNTFQEFFGLNNCSSSNRLDQAMQVTETLGMTHCCINPIIYAFVGEKFRNYLLVFFQKHIAKRFCKCCSIFQQEAPERASSVYTRSTAEQEISVGL.

Over 1 to 30 (MDYQVSSPTYDIDYYTSEPCQKINVKQIAA) the chain is Extracellular. Tyr-3 carries the post-translational modification Sulfotyrosine. 2 O-linked (GalNAc...) serine glycosylation sites follow: Ser-6 and Ser-7. 3 positions are modified to sulfotyrosine: Tyr-10, Tyr-14, and Tyr-15. 2 cysteine pairs are disulfide-bonded: Cys-20–Cys-269 and Cys-101–Cys-178. The helical transmembrane segment at 31 to 58 (RLLPPLYSLVFIFGFVGNILVVLILINC) threads the bilayer. Residues 59 to 68 (KRLKSMTDIY) lie on the Cytoplasmic side of the membrane. The chain crosses the membrane as a helical span at residues 69–89 (LLNLAISDLLFLLTVPFWAHY). Residues 90 to 102 (AAAQWDFGNTMCQ) lie on the Extracellular side of the membrane. The chain crosses the membrane as a helical span at residues 103–124 (LLTGLYFIGFFSGIFFIILLTI). At 125 to 141 (DRYLAIVHAVFALKART) the chain is on the cytoplasmic side. The helical transmembrane segment at 142–166 (VTFGVVTSVITWVVAVFASLPGIIF) threads the bilayer. Residues 167–198 (TRSQREGLHYTCSSHFPYSQYQFWKNFQTLKM) are Extracellular-facing. The chain crosses the membrane as a helical span at residues 199–218 (VILGLVLPLLVMVICYSGIL). Residues 219-235 (KTLLRCRNEKKRHRAVR) are Cytoplasmic-facing. The helical transmembrane segment at 236–260 (LIFTIMIVYFLFWAPYNIVLLLNTF) threads the bilayer. Over 261–277 (QEFFGLNNCSSSNRLDQ) the chain is Extracellular. A helical membrane pass occupies residues 278–301 (AMQVTETLGMTHCCINPIIYAFVG). Residues 302–352 (EKFRNYLLVFFQKHIAKRFCKCCSIFQQEAPERASSVYTRSTAEQEISVGL) are Cytoplasmic-facing. S-palmitoyl cysteine attachment occurs at residues Cys-321, Cys-323, and Cys-324. Residues Ser-336, Ser-337, Ser-342, and Ser-349 each carry the phosphoserine; by BARK1 modification.

This sequence belongs to the G-protein coupled receptor 1 family. As to quaternary structure, interacts with PRAF2. Efficient ligand binding to CCL3/MIP-1alpha and CCL4/MIP-1beta requires sulfation, O-glycosylation and sialic acid modifications. Glycosylation on Ser-6 is required for efficient binding of CCL4. Interacts with GRK2. Interacts with ARRB1 and ARRB2. Interacts with CNIH4. Interacts with S100A4; this interaction stimulates T-lymphocyte chemotaxis. In terms of processing, sulfated on at least 2 of the N-terminal tyrosines. Sulfation is required for efficient binding of the chemokines, CCL3 and CCL4. Palmitoylation in the C-terminal is important for cell surface expression. Post-translationally, phosphorylation on serine residues in the C-terminal is stimulated by binding CC chemokines especially by APO-RANTES. In terms of processing, O-glycosylated, but not N-glycosylated. Ser-6 appears to be the major site even if Ser-7 may be also O-glycosylated. Also sialylated glycans present which contribute to chemokine binding. Thr-16 and Ser-17 may also be glycosylated and, if so, with small moieties such as a T-antigen.

It is found in the cell membrane. Its function is as follows. Receptor for a number of inflammatory CC-chemokines including CCL3/MIP-1-alpha, CCL4/MIP-1-beta and RANTES and subsequently transduces a signal by increasing the intracellular calcium ion level. May play a role in the control of granulocytic lineage proliferation or differentiation. Participates in T-lymphocyte migration to the infection site by acting as a chemotactic receptor. The polypeptide is C-C chemokine receptor type 5 (CCR5) (Macaca arctoides (Stump-tailed macaque)).